A 164-amino-acid polypeptide reads, in one-letter code: 6,7-dimethyl-8-ribityllumazine synthase (164 aa).

Residues Y30, 61 to 63 (ALE), and 85 to 87 (CVI) each bind 5-amino-6-(D-ribitylamino)uracil. Position 90-91 (90-91 (ET)) interacts with (2S)-2-hydroxy-3-oxobutyl phosphate. H93 acts as the Proton donor in catalysis. N118 is a 5-amino-6-(D-ribitylamino)uracil binding site. R132 lines the (2S)-2-hydroxy-3-oxobutyl phosphate pocket.

The protein belongs to the DMRL synthase family.

The enzyme catalyses (2S)-2-hydroxy-3-oxobutyl phosphate + 5-amino-6-(D-ribitylamino)uracil = 6,7-dimethyl-8-(1-D-ribityl)lumazine + phosphate + 2 H2O + H(+). It functions in the pathway cofactor biosynthesis; riboflavin biosynthesis; riboflavin from 2-hydroxy-3-oxobutyl phosphate and 5-amino-6-(D-ribitylamino)uracil: step 1/2. Functionally, catalyzes the formation of 6,7-dimethyl-8-ribityllumazine by condensation of 5-amino-6-(D-ribitylamino)uracil with 3,4-dihydroxy-2-butanone 4-phosphate. This is the penultimate step in the biosynthesis of riboflavin. This is 6,7-dimethyl-8-ribityllumazine synthase from Methylobacterium radiotolerans (strain ATCC 27329 / DSM 1819 / JCM 2831 / NBRC 15690 / NCIMB 10815 / 0-1).